Here is a 417-residue protein sequence, read N- to C-terminus: Probable sugar-binding periplasmic protein (417 aa).

An N-terminal signal peptide occupies residues methionine 1–alanine 21.

This sequence belongs to the bacterial solute-binding protein 1 family.

The protein localises to the periplasm. Part of a binding-protein-dependent transport system for a sugar. The polypeptide is Probable sugar-binding periplasmic protein (Mesorhizobium japonicum (strain LMG 29417 / CECT 9101 / MAFF 303099) (Mesorhizobium loti (strain MAFF 303099))).